We begin with the raw amino-acid sequence, 109 residues long: N-alpha-acetyltransferase 38, NatC auxiliary subunit (109 aa).

The Sm domain maps to leucine 23–serine 101.

This sequence belongs to the snRNP Sm proteins family. In terms of assembly, component of the N-terminal acetyltransferase C (NatC) complex.

The protein resides in the cytoplasm. It is found in the nucleus. Functionally, auxillary component of the N-terminal acetyltransferase C (NatC) complex which catalyzes acetylation of N-terminal methionine residues. N-terminal acetylation protects proteins from ubiquitination and degradation by the N-end rule pathway. In Danio rerio (Zebrafish), this protein is N-alpha-acetyltransferase 38, NatC auxiliary subunit (naa38).